We begin with the raw amino-acid sequence, 192 residues long: Orotate phosphoribosyltransferase (192 aa).

116–124 (EDIVTTGLS) is a 5-phospho-alpha-D-ribose 1-diphosphate binding site. 2 residues coordinate orotate: Thr-120 and Arg-148.

The protein belongs to the purine/pyrimidine phosphoribosyltransferase family. PyrE subfamily. In terms of assembly, homodimer. It depends on Mg(2+) as a cofactor.

The enzyme catalyses orotidine 5'-phosphate + diphosphate = orotate + 5-phospho-alpha-D-ribose 1-diphosphate. It functions in the pathway pyrimidine metabolism; UMP biosynthesis via de novo pathway; UMP from orotate: step 1/2. Catalyzes the transfer of a ribosyl phosphate group from 5-phosphoribose 1-diphosphate to orotate, leading to the formation of orotidine monophosphate (OMP). This is Orotate phosphoribosyltransferase from Brucella canis (strain ATCC 23365 / NCTC 10854 / RM-666).